The sequence spans 310 residues: Phytoene synthase 2, chloroplastic (310 aa).

Residues 1–25 (DPDIVLPGNLGLLSEAYDRCGEVCA) constitute a chloroplast transit peptide.

Belongs to the phytoene/squalene synthase family. Monomer.

The protein localises to the plastid. It localises to the chloroplast. The catalysed reaction is 2 (2E,6E,10E)-geranylgeranyl diphosphate = 15-cis-phytoene + 2 diphosphate. It functions in the pathway carotenoid biosynthesis; phytoene biosynthesis; all-trans-phytoene from geranylgeranyl diphosphate: step 1/1. Its function is as follows. Catalyzes the reaction from prephytoene diphosphate to phytoene. This Solanum lycopersicum (Tomato) protein is Phytoene synthase 2, chloroplastic (PSY2).